A 100-amino-acid polypeptide reads, in one-letter code: Urease subunit gamma (100 aa).

It belongs to the urease gamma subunit family. As to quaternary structure, heterotrimer of UreA (gamma), UreB (beta) and UreC (alpha) subunits. Three heterotrimers associate to form the active enzyme.

It localises to the cytoplasm. The enzyme catalyses urea + 2 H2O + H(+) = hydrogencarbonate + 2 NH4(+). It participates in nitrogen metabolism; urea degradation; CO(2) and NH(3) from urea (urease route): step 1/1. This is Urease subunit gamma from Mycobacterium ulcerans (strain Agy99).